The primary structure comprises 103 residues: Large ribosomal subunit protein uL24 (103 aa).

The protein belongs to the universal ribosomal protein uL24 family. Part of the 50S ribosomal subunit.

In terms of biological role, one of two assembly initiator proteins, it binds directly to the 5'-end of the 23S rRNA, where it nucleates assembly of the 50S subunit. Functionally, one of the proteins that surrounds the polypeptide exit tunnel on the outside of the subunit. The protein is Large ribosomal subunit protein uL24 of Geobacillus stearothermophilus (Bacillus stearothermophilus).